The chain runs to 419 residues: Phosphoglycerate kinase (419 aa).

Positions 24, 25, 26, 27, 40, 63, 64, 66, 67, 122, 123, 169, and 170 each coordinate (2R)-3-phosphoglycerate. Gly213 provides a ligand contact to ADP. Position 213 (Gly213) interacts with CDP. AMP-binding residues include Ala214 and Lys215. Residue Ala214 participates in ATP binding. Ala214 serves as a coordination point for Mg(2+). Mg(2+) is bound by residues Ala217 and Asp218. CDP is bound at residue Asp218. Lys219 serves as a coordination point for AMP. Lys219 contacts ATP. Gly237 is an ADP binding site. Residue Gly237 coordinates CDP. Gly238 and Gly313 together coordinate AMP. Gly238 and Gly313 together coordinate ATP. Gly338 and Phe343 together coordinate CDP. Phe343 provides a ligand contact to ADP. An AMP-binding site is contributed by Glu344. ATP is bound by residues Glu344, Asp375, and Thr376. Asp375 is a Mg(2+) binding site.

This sequence belongs to the phosphoglycerate kinase family. In terms of assembly, monomer. Requires Mg(2+) as cofactor.

It catalyses the reaction (2R)-3-phosphoglycerate + ATP = (2R)-3-phospho-glyceroyl phosphate + ADP. The protein operates within carbohydrate degradation; glycolysis; pyruvate from D-glyceraldehyde 3-phosphate: step 2/5. This Sterkiella nova (Ciliate) protein is Phosphoglycerate kinase (PGK).